Consider the following 172-residue polypeptide: Protein-export protein SecB (172 aa).

The protein belongs to the SecB family. Homotetramer, a dimer of dimers. One homotetramer interacts with 1 SecA dimer.

The protein resides in the cytoplasm. One of the proteins required for the normal export of preproteins out of the cell cytoplasm. It is a molecular chaperone that binds to a subset of precursor proteins, maintaining them in a translocation-competent state. It also specifically binds to its receptor SecA. This chain is Protein-export protein SecB, found in Haemophilus ducreyi (strain 35000HP / ATCC 700724).